The following is a 412-amino-acid chain: Proteasome-activating nucleotidase (412 aa).

The stretch at 15–72 (EDLYRYLLERVTNLEDRNTELREQLRQIEADKRYLETQKVRYEREVRKFKGEIEQMKS) forms a coiled coil. ATP is bound by residues 197 to 202 (GTGKTL) and His-336. The interval 410–412 (MFA) is docks into pockets in the proteasome alpha-ring to cause gate opening.

Belongs to the AAA ATPase family. Homohexamer. The hexameric complex has a two-ring architecture resembling a top hat that caps the 20S proteasome core at one or both ends. Upon ATP-binding, the C-terminus of PAN interacts with the alpha-rings of the proteasome core by binding to the intersubunit pockets.

The protein resides in the cytoplasm. Its function is as follows. ATPase which is responsible for recognizing, binding, unfolding and translocation of substrate proteins into the archaeal 20S proteasome core particle. Is essential for opening the gate of the 20S proteasome via an interaction with its C-terminus, thereby allowing substrate entry and access to the site of proteolysis. Thus, the C-termini of the proteasomal ATPase function like a 'key in a lock' to induce gate opening and therefore regulate proteolysis. Unfolding activity requires energy from ATP hydrolysis, whereas ATP binding alone promotes ATPase-20S proteasome association which triggers gate opening, and supports translocation of unfolded substrates. This Methanosphaerula palustris (strain ATCC BAA-1556 / DSM 19958 / E1-9c) protein is Proteasome-activating nucleotidase.